Consider the following 449-residue polypeptide: Adenosylhomocysteinase (449 aa).

N-acetylserine is present on Ser-2. Lys-21 is covalently cross-linked (Glycyl lysine isopeptide (Lys-Gly) (interchain with G-Cter in ubiquitin)). Substrate is bound by residues Thr-58, Asp-134, and Glu-159. 160-162 contributes to the NAD(+) binding site; the sequence is TTT. Substrate is bound by residues Lys-189 and Asp-193. NAD(+) contacts are provided by residues Asn-194, 223 to 228, Glu-246, 302 to 304, and Asn-349; these read GYGDVG and IGH. Thr-393 is subject to Phosphothreonine. A Glycyl lysine isopeptide (Lys-Gly) (interchain with G-Cter in ubiquitin) cross-link involves residue Lys-413.

This sequence belongs to the adenosylhomocysteinase family. Requires NAD(+) as cofactor.

It carries out the reaction S-adenosyl-L-homocysteine + H2O = L-homocysteine + adenosine. The protein operates within amino-acid biosynthesis; L-homocysteine biosynthesis; L-homocysteine from S-adenosyl-L-homocysteine: step 1/1. Functionally, adenosylhomocysteine is a competitive inhibitor of S-adenosyl-L-methionine-dependent methyl transferase reactions; therefore adenosylhomocysteinase may play a key role in the control of methylations via regulation of the intracellular concentration of adenosylhomocysteine. This is Adenosylhomocysteinase (SAH1) from Saccharomyces cerevisiae (strain ATCC 204508 / S288c) (Baker's yeast).